We begin with the raw amino-acid sequence, 473 residues long: Glutamate--tRNA ligase (473 aa).

The short motif at 11–21 is the 'HIGH' region element; that stretch reads PSPTGFLHIGG. The 'KMSKS' region signature appears at 240-244; the sequence is KLSKR. Lys243 is a binding site for ATP.

It belongs to the class-I aminoacyl-tRNA synthetase family. Glutamate--tRNA ligase type 1 subfamily. In terms of assembly, monomer.

It localises to the cytoplasm. It carries out the reaction tRNA(Glu) + L-glutamate + ATP = L-glutamyl-tRNA(Glu) + AMP + diphosphate. Functionally, catalyzes the attachment of glutamate to tRNA(Glu) in a two-step reaction: glutamate is first activated by ATP to form Glu-AMP and then transferred to the acceptor end of tRNA(Glu). This is Glutamate--tRNA ligase from Rhodopseudomonas palustris (strain HaA2).